The sequence spans 466 residues: Asparagine--tRNA ligase (466 aa).

Belongs to the class-II aminoacyl-tRNA synthetase family. In terms of assembly, homodimer.

It is found in the cytoplasm. It carries out the reaction tRNA(Asn) + L-asparagine + ATP = L-asparaginyl-tRNA(Asn) + AMP + diphosphate + H(+). The polypeptide is Asparagine--tRNA ligase (Xylella fastidiosa (strain Temecula1 / ATCC 700964)).